The sequence spans 209 residues: Uracil phosphoribosyltransferase (209 aa).

5-phospho-alpha-D-ribose 1-diphosphate is bound by residues arginine 79, arginine 104, and 131–139 (DPMLATGGS). Uracil contacts are provided by residues isoleucine 194 and 199-201 (GDA). Residue aspartate 200 coordinates 5-phospho-alpha-D-ribose 1-diphosphate.

Belongs to the UPRTase family. It depends on Mg(2+) as a cofactor.

The enzyme catalyses UMP + diphosphate = 5-phospho-alpha-D-ribose 1-diphosphate + uracil. The protein operates within pyrimidine metabolism; UMP biosynthesis via salvage pathway; UMP from uracil: step 1/1. Its activity is regulated as follows. Allosterically activated by GTP. Catalyzes the conversion of uracil and 5-phospho-alpha-D-ribose 1-diphosphate (PRPP) to UMP and diphosphate. This Streptococcus uberis (strain ATCC BAA-854 / 0140J) protein is Uracil phosphoribosyltransferase.